A 335-amino-acid chain; its full sequence is Methionine import ATP-binding protein MetN (335 aa).

In terms of domain architecture, ABC transporter spans 2-241 (IQFQRLHKSY…PKHATTRRFV (240 aa)). 38-45 (GHSGAGKS) is a binding site for ATP.

It belongs to the ABC transporter superfamily. Methionine importer (TC 3.A.1.24) family. The complex is composed of two ATP-binding proteins (MetN), two transmembrane proteins (MetI) and a solute-binding protein (MetQ).

The protein resides in the cell inner membrane. The catalysed reaction is L-methionine(out) + ATP + H2O = L-methionine(in) + ADP + phosphate + H(+). The enzyme catalyses D-methionine(out) + ATP + H2O = D-methionine(in) + ADP + phosphate + H(+). Functionally, part of the ABC transporter complex MetNIQ involved in methionine import. Responsible for energy coupling to the transport system. This chain is Methionine import ATP-binding protein MetN, found in Xanthomonas axonopodis pv. citri (strain 306).